The following is a 145-amino-acid chain: YIDAETMTLHHDKHHATYVANANAALEKHPEIGEDLEALLADVEQIPADIRQALINNGGGHLNHALFWELLSPEKQEPTAEVAAAINEAFGSFEAFQEAFTAAATTRFGSGWAWLVVNDEGKLEVVSTANQDTPISDGKKPILAL.

2 residues coordinate Fe(3+): His-10 and His-64. The Mn(2+) site is built by His-10 and His-64.

It belongs to the iron/manganese superoxide dismutase family. Mn(2+) serves as cofactor. It depends on Fe(3+) as a cofactor.

It carries out the reaction 2 superoxide + 2 H(+) = H2O2 + O2. Its function is as follows. Destroys superoxide anion radicals which are normally produced within the cells and which are toxic to biological systems. Catalyzes the dismutation of superoxide anion radicals into O2 and H2O2 by successive reduction and oxidation of the transition metal ion at the active site. This chain is Superoxide dismutase [Mn/Fe] (sodA), found in Streptococcus salivarius.